Here is a 378-residue protein sequence, read N- to C-terminus: Putative methyltransferase spot-1 (378 aa).

This sequence belongs to the class IV-like SAM-binding methyltransferase superfamily.

The protein resides in the cytoplasm. The protein localises to the cytoskeleton. Its subcellular location is the spindle. It is found in the chromosome. It localises to the centromere. The protein resides in the kinetochore. The protein localises to the microtubule organizing center. Its subcellular location is the centrosome. In terms of biological role, required for association of the centrosomes with the poles of the bipolar mitotic spindle during metaphase. The protein is Putative methyltransferase spot-1 of Caenorhabditis elegans.